Here is a 485-residue protein sequence, read N- to C-terminus: GTPase Der (485 aa).

EngA-type G domains follow at residues 3-167 (PTIA…PEPE) and 176-349 (PVFA…NAAM). GTP-binding positions include 9 to 16 (GRPNVGKS), 56 to 60 (DTGGF), 119 to 122 (NKGE), 182 to 189 (GRPNVGKS), 229 to 233 (DTAGV), and 294 to 297 (NKWD). The KH-like domain maps to 350–434 (IKMPTPKITR…PLRIQYNVSE (85 aa)). The segment at 435–485 (NPYENAEDKPKKKPLRRVSLSNRIEKREGRKEEKNRFKKKTKVSVKKQFSK) is disordered. Basic and acidic residues predominate over residues 457-469 (RIEKREGRKEEKN). Over residues 470–485 (RFKKKTKVSVKKQFSK) the composition is skewed to basic residues.

The protein belongs to the TRAFAC class TrmE-Era-EngA-EngB-Septin-like GTPase superfamily. EngA (Der) GTPase family. In terms of assembly, associates with the 50S ribosomal subunit.

GTPase that plays an essential role in the late steps of ribosome biogenesis. This Neisseria meningitidis serogroup B (strain ATCC BAA-335 / MC58) protein is GTPase Der.